The sequence spans 144 residues: Maximins 4/H3 type 3 (144 aa).

The N-terminal stretch at 1 to 18 (MNFKYIIAVSFFIASAYA) is a signal peptide. Residues 19 to 43 (RTEEKDVQSLSQRDVLEEESLREIR) constitute a propeptide that is removed on maturation. N70 bears the Asparagine amide mark. The propeptide occupies 74–123 (TAEDHEVMKRLEAVMRDLDSLDHPEEASERQTRGFNQEEIANLFTKKEKR). Isoleucine amide is present on I143.

The protein belongs to the bombinin family. As to expression, expressed by the skin glands.

It localises to the secreted. Maximin-4 shows antibacterial activity against both Gram-positive and Gram-negative bacteria. It also shows antimicrobial activity against the fungus C.albicans, but not against A.flavus nor P.uticale. It has little hemolytic activity. It does not possess a significant cytotoxicity against tumor cell lines. It does not possess a significant anti-HIV activity. In terms of biological role, maximin-H3 shows antibacterial activity against both Gram-positive and Gram-negative bacteria. It also shows antimicrobial activity against the fungus C.albicans. Shows strong hemolytic activity. This chain is Maximins 4/H3 type 3, found in Bombina maxima (Giant fire-bellied toad).